Reading from the N-terminus, the 66-residue chain is uncharacterized protein (66 aa).

The next 2 helical transmembrane spans lie at 5 to 25 (ALIV…PLVN) and 30 to 50 (IMFG…VTPL).

The protein localises to the cell membrane. This is an uncharacterized protein from Bacillus subtilis (strain 168).